The chain runs to 187 residues: UPF0302 protein SERP1032 (187 aa).

It belongs to the UPF0302 family.

This chain is UPF0302 protein SERP1032, found in Staphylococcus epidermidis (strain ATCC 35984 / DSM 28319 / BCRC 17069 / CCUG 31568 / BM 3577 / RP62A).